Reading from the N-terminus, the 442-residue chain is UDP-N-acetylmuramoylalanine--D-glutamate ligase (442 aa).

An ATP-binding site is contributed by 113-119 (GSNGKTT).

It belongs to the MurCDEF family.

It is found in the cytoplasm. It catalyses the reaction UDP-N-acetyl-alpha-D-muramoyl-L-alanine + D-glutamate + ATP = UDP-N-acetyl-alpha-D-muramoyl-L-alanyl-D-glutamate + ADP + phosphate + H(+). It functions in the pathway cell wall biogenesis; peptidoglycan biosynthesis. Functionally, cell wall formation. Catalyzes the addition of glutamate to the nucleotide precursor UDP-N-acetylmuramoyl-L-alanine (UMA). The sequence is that of UDP-N-acetylmuramoylalanine--D-glutamate ligase from Coxiella burnetii (strain CbuG_Q212) (Coxiella burnetii (strain Q212)).